The chain runs to 248 residues: tRNA pseudouridine synthase A (248 aa).

The active-site Nucleophile is the aspartate 54. Tyrosine 112 is a substrate binding site.

This sequence belongs to the tRNA pseudouridine synthase TruA family. Homodimer.

The enzyme catalyses uridine(38/39/40) in tRNA = pseudouridine(38/39/40) in tRNA. Its function is as follows. Formation of pseudouridine at positions 38, 39 and 40 in the anticodon stem and loop of transfer RNAs. This chain is tRNA pseudouridine synthase A, found in Geobacillus sp. (strain WCH70).